A 354-amino-acid chain; its full sequence is Magnesium-protoporphyrin IX monomethyl ester [oxidative] cyclase 2 (354 aa).

Belongs to the AcsF family. Fe cation is required as a cofactor.

The enzyme catalyses Mg-protoporphyrin IX 13-monomethyl ester + 3 NADPH + 3 O2 + 2 H(+) = 3,8-divinyl protochlorophyllide a + 3 NADP(+) + 5 H2O. The protein operates within porphyrin-containing compound metabolism; chlorophyll biosynthesis (light-independent). Its function is as follows. Catalyzes the formation of the isocyclic ring in chlorophyll biosynthesis. Mediates the cyclase reaction, which results in the formation of divinylprotochlorophyllide (Pchlide) characteristic of all chlorophylls from magnesium-protoporphyrin IX 13-monomethyl ester (MgPMME). This is Magnesium-protoporphyrin IX monomethyl ester [oxidative] cyclase 2 from Thermosynechococcus vestitus (strain NIES-2133 / IAM M-273 / BP-1).